We begin with the raw amino-acid sequence, 325 residues long: Heat-inducible transcription repressor HrcA (325 aa).

It belongs to the HrcA family.

Its function is as follows. Negative regulator of class I heat shock genes (grpE-dnaK-dnaJ and groELS operons). Prevents heat-shock induction of these operons. This is Heat-inducible transcription repressor HrcA from Staphylococcus epidermidis (strain ATCC 35984 / DSM 28319 / BCRC 17069 / CCUG 31568 / BM 3577 / RP62A).